Here is a 214-residue protein sequence, read N- to C-terminus: Thiamine-phosphate synthase (214 aa).

Residues 40 to 44 (QLREK) and N72 contribute to the 4-amino-2-methyl-5-(diphosphooxymethyl)pyrimidine site. Positions 73 and 92 each coordinate Mg(2+). S110 lines the 4-amino-2-methyl-5-(diphosphooxymethyl)pyrimidine pocket. Position 137-139 (137-139 (SPT)) interacts with 2-[(2R,5Z)-2-carboxy-4-methylthiazol-5(2H)-ylidene]ethyl phosphate. Residue K140 coordinates 4-amino-2-methyl-5-(diphosphooxymethyl)pyrimidine. 2-[(2R,5Z)-2-carboxy-4-methylthiazol-5(2H)-ylidene]ethyl phosphate is bound by residues G167 and 185 to 186 (IS).

This sequence belongs to the thiamine-phosphate synthase family. It depends on Mg(2+) as a cofactor.

The catalysed reaction is 2-[(2R,5Z)-2-carboxy-4-methylthiazol-5(2H)-ylidene]ethyl phosphate + 4-amino-2-methyl-5-(diphosphooxymethyl)pyrimidine + 2 H(+) = thiamine phosphate + CO2 + diphosphate. It carries out the reaction 2-(2-carboxy-4-methylthiazol-5-yl)ethyl phosphate + 4-amino-2-methyl-5-(diphosphooxymethyl)pyrimidine + 2 H(+) = thiamine phosphate + CO2 + diphosphate. It catalyses the reaction 4-methyl-5-(2-phosphooxyethyl)-thiazole + 4-amino-2-methyl-5-(diphosphooxymethyl)pyrimidine + H(+) = thiamine phosphate + diphosphate. Its pathway is cofactor biosynthesis; thiamine diphosphate biosynthesis; thiamine phosphate from 4-amino-2-methyl-5-diphosphomethylpyrimidine and 4-methyl-5-(2-phosphoethyl)-thiazole: step 1/1. Functionally, condenses 4-methyl-5-(beta-hydroxyethyl)thiazole monophosphate (THZ-P) and 2-methyl-4-amino-5-hydroxymethyl pyrimidine pyrophosphate (HMP-PP) to form thiamine monophosphate (TMP). This chain is Thiamine-phosphate synthase, found in Wolinella succinogenes (strain ATCC 29543 / DSM 1740 / CCUG 13145 / JCM 31913 / LMG 7466 / NCTC 11488 / FDC 602W) (Vibrio succinogenes).